Here is a 508-residue protein sequence, read N- to C-terminus: 3-octaprenyl-4-hydroxybenzoate carboxy-lyase (508 aa).

Mn(2+) is bound at residue N172. Residues 175–177 (IYR), 189–191 (RWL), and 194–195 (RG) contribute to the prenylated FMN site. E238 serves as a coordination point for Mn(2+). D287 acts as the Proton donor in catalysis. The disordered stretch occupies residues 483-508 (GEYGIATPPPPPRHSPPSDERGHDDV). Over residues 498–508 (PPSDERGHDDV) the composition is skewed to basic and acidic residues.

This sequence belongs to the UbiD family. In terms of assembly, homohexamer. It depends on prenylated FMN as a cofactor. Mn(2+) is required as a cofactor.

Its subcellular location is the cell membrane. It carries out the reaction a 4-hydroxy-3-(all-trans-polyprenyl)benzoate + H(+) = a 2-(all-trans-polyprenyl)phenol + CO2. It participates in cofactor biosynthesis; ubiquinone biosynthesis. Its function is as follows. Catalyzes the decarboxylation of 3-octaprenyl-4-hydroxy benzoate to 2-octaprenylphenol, an intermediate step in ubiquinone biosynthesis. The sequence is that of 3-octaprenyl-4-hydroxybenzoate carboxy-lyase from Chromohalobacter salexigens (strain ATCC BAA-138 / DSM 3043 / CIP 106854 / NCIMB 13768 / 1H11).